Here is a 329-residue protein sequence, read N- to C-terminus: MARRFLLEFEKPLVELENQIDQIRELARDSEVDVSQQLLQLETLAARRREEIFNALTPAQKIQVARHPQRPSTLDYIQMFCDDWVELHGDRNGTDDQALIGGLARIGEKSVLLIGQQKGRDTKENVARNFGMAKPGGYRKALRLMDHADRFNLPIISFIDTPGAYAGLIAEEQGQGEAIAVNLREMFRLKVPIIATVIGEGGSGGALGIGVADRLLMFEHSVYTVASPEACASILWRDAGKAPEAASALKITGPDLMKLGIVDEVLKEPSGGNNWAPLQAGDTLKNALEKHLSELLALSPDELRNNRYSKFRKMGKYLESQSIESEISV.

The 255-residue stretch at 40 to 294 (QLETLAARRR…KNALEKHLSE (255 aa)) folds into the CoA carboxyltransferase C-terminal domain.

This sequence belongs to the AccA family. In terms of assembly, acetyl-CoA carboxylase is a heterohexamer composed of biotin carboxyl carrier protein (AccB), biotin carboxylase (AccC) and two subunits each of ACCase subunit alpha (AccA) and ACCase subunit beta (AccD).

Its subcellular location is the cytoplasm. It catalyses the reaction N(6)-carboxybiotinyl-L-lysyl-[protein] + acetyl-CoA = N(6)-biotinyl-L-lysyl-[protein] + malonyl-CoA. It participates in lipid metabolism; malonyl-CoA biosynthesis; malonyl-CoA from acetyl-CoA: step 1/1. Functionally, component of the acetyl coenzyme A carboxylase (ACC) complex. First, biotin carboxylase catalyzes the carboxylation of biotin on its carrier protein (BCCP) and then the CO(2) group is transferred by the carboxyltransferase to acetyl-CoA to form malonyl-CoA. This Prochlorococcus marinus (strain NATL2A) protein is Acetyl-coenzyme A carboxylase carboxyl transferase subunit alpha.